Reading from the N-terminus, the 75-residue chain is Metallothionein-like protein 1 (75 aa).

This sequence belongs to the metallothionein superfamily. Type 15 family.

In terms of biological role, metallothioneins have a high content of cysteine residues that bind various heavy metals. This chain is Metallothionein-like protein 1 (ALI1), found in Triticum aestivum (Wheat).